Reading from the N-terminus, the 359-residue chain is tRNA pseudouridine synthase B (359 aa).

The Nucleophile role is filled by D63.

It belongs to the pseudouridine synthase TruB family. Type 1 subfamily.

The catalysed reaction is uridine(55) in tRNA = pseudouridine(55) in tRNA. In terms of biological role, responsible for synthesis of pseudouridine from uracil-55 in the psi GC loop of transfer RNAs. The chain is tRNA pseudouridine synthase B from Psychrobacter cryohalolentis (strain ATCC BAA-1226 / DSM 17306 / VKM B-2378 / K5).